A 147-amino-acid polypeptide reads, in one-letter code: Large ribosomal subunit protein uL13 (147 aa).

Residues P128–Q147 form a disordered region.

Belongs to the universal ribosomal protein uL13 family. Part of the 50S ribosomal subunit.

Its function is as follows. This protein is one of the early assembly proteins of the 50S ribosomal subunit, although it is not seen to bind rRNA by itself. It is important during the early stages of 50S assembly. The polypeptide is Large ribosomal subunit protein uL13 (Mycobacterium bovis (strain BCG / Pasteur 1173P2)).